A 306-amino-acid polypeptide reads, in one-letter code: Ectoine dioxygenase (306 aa).

Residue Gln-127 participates in L-ectoine binding. Lys-133 contributes to the 2-oxoglutarate binding site. Positions 144, 146, and 245 each coordinate Fe cation.

The protein belongs to the PhyH family. EctD subfamily. As to quaternary structure, homodimer. Fe(2+) serves as cofactor.

The catalysed reaction is L-ectoine + 2-oxoglutarate + O2 = 5-hydroxyectoine + succinate + CO2. In terms of biological role, involved in the biosynthesis of 5-hydroxyectoine, called compatible solute, which helps organisms to survive extreme osmotic stress by acting as a highly soluble organic osmolyte. Catalyzes the 2-oxoglutarate-dependent selective hydroxylation of L-ectoine to yield (4S,5S)-5-hydroxyectoine. The polypeptide is Ectoine dioxygenase (Sphingopyxis alaskensis (strain DSM 13593 / LMG 18877 / RB2256) (Sphingomonas alaskensis)).